The sequence spans 544 residues: MSAKQIVFSTDARDRLLRGVELLNNAVKVTLGPKGRNVVIDKSYGAPRITKDGVSVAKEIELEDKFENMGAQMVRAVASKTNDLAGDGTTTATVLAASIFREGAKLVSVGMNPMDLKRGIDLGVAAVLAEIKARATKVISSSEIAQVGTIAANGDAGVGEMIARAMEKVGNEGVITVEEARTADTELDVVEGMQFDRGYLSPYFVTNAEKMRVELEDPYILIHEKKLGSLQAMLPILEAAVQSGKPLLIISEDVEGEVLATLVVNRLRGGLKIAAVKTPGFGDRRKAMLEDIAVLTAGQMISEDLGIKLENVTLDMLGRARRVLIEKDTTTIIDGSGDKASIQARVSQIKAQIEETASDYDKEKLQERLAKLAGGVAVIRVGGATELEVKEKKDRIDDALNATRAAVEEGIVPGGGVALLRAKSALVGLTDDNADVTAGISIVRRALEAPIRQIADNAGVEGSIVVGKLVDGRDHNQGFDAQTETYVDMIKAGIVDPAKVVRTALRDAGSIASLLITAEAMIADIPERGSPQSTGNGAVDSMGY.

ATP contacts are provided by residues 30 to 33 (TLGP), K51, 87 to 91 (DGTTT), G415, and D496.

It belongs to the chaperonin (HSP60) family. Forms a cylinder of 14 subunits composed of two heptameric rings stacked back-to-back. Interacts with the co-chaperonin GroES.

Its subcellular location is the cytoplasm. It carries out the reaction ATP + H2O + a folded polypeptide = ADP + phosphate + an unfolded polypeptide.. Its function is as follows. Together with its co-chaperonin GroES, plays an essential role in assisting protein folding. The GroEL-GroES system forms a nano-cage that allows encapsulation of the non-native substrate proteins and provides a physical environment optimized to promote and accelerate protein folding. In Rhizobium meliloti (strain 1021) (Ensifer meliloti), this protein is Chaperonin GroEL 3.